We begin with the raw amino-acid sequence, 417 residues long: Inhibitor of growth protein 3 (417 aa).

Disordered stretches follow at residues 126 to 165 (LDTP…SEKK), 177 to 198 (SDAS…STNN), and 284 to 320 (QTLT…SSSL). Over residues 136-152 (HHVHSHSLGEKRKHNPS) the composition is skewed to basic residues. Positions 156-165 (STTDHVSEKK) are enriched in basic and acidic residues. The span at 177 to 187 (SDASKENTAGC) shows a compositional bias: polar residues. Composition is skewed to low complexity over residues 189–198 (NNLSSSSTNN), 284–294 (QTLTSSATTDS), and 303–320 (NNKS…SSSL). The segment at 359-408 (PRYCICNQVSYGEMVGCDNQDCPIEWFHYGCVGLSEAPKGKWYCPQCTAA) adopts a PHD-type zinc-finger fold. Residues cysteine 362, cysteine 364, cysteine 375, cysteine 380, histidine 386, cysteine 389, cysteine 402, and cysteine 405 each coordinate Zn(2+).

Belongs to the ING family. Interacts with H3K4me3 and to a lesser extent with H3K4me2. Component of the NuA4 histone acetyltransferase complex.

Its subcellular location is the nucleus. Functionally, component of the NuA4 histone acetyltransferase (HAT) complex which is involved in transcriptional activation of select genes principally by acetylation of nucleosomal histone H4 and H2A. This modification may both alter nucleosome - DNA interactions and promote interaction of the modified histones with other proteins which positively regulate transcription. NuA4 may also play a direct role in DNA repair when directly recruited to sites of DNA damage. The protein is Inhibitor of growth protein 3 (ing3) of Xenopus tropicalis (Western clawed frog).